We begin with the raw amino-acid sequence, 121 residues long: NADH-quinone oxidoreductase subunit A 2 (121 aa).

The next 3 helical transmembrane spans lie at 6-26 (FLPV…TLFV), 60-80 (VPFF…MFLF), and 89-109 (IGFV…VGFA).

Belongs to the complex I subunit 3 family. NDH-1 is composed of 14 different subunits. Subunits NuoA, H, J, K, L, M, N constitute the membrane sector of the complex.

It is found in the cell inner membrane. It carries out the reaction a quinone + NADH + 5 H(+)(in) = a quinol + NAD(+) + 4 H(+)(out). In terms of biological role, NDH-1 shuttles electrons from NADH, via FMN and iron-sulfur (Fe-S) centers, to quinones in the respiratory chain. The immediate electron acceptor for the enzyme in this species is believed to be ubiquinone. Couples the redox reaction to proton translocation (for every two electrons transferred, four hydrogen ions are translocated across the cytoplasmic membrane), and thus conserves the redox energy in a proton gradient. The protein is NADH-quinone oxidoreductase subunit A 2 of Rhizobium meliloti (strain 1021) (Ensifer meliloti).